The following is a 124-amino-acid chain: Tax1-binding protein 3 (124 aa).

Position 2 is an N-acetylserine (serine 2). Residues 15-112 form the PDZ domain; sequence RVEIHKLRQG…EVVRLLVTRQ (98 aa). Serine 61 bears the Phosphoserine mark.

In terms of assembly, interacts (via its PDZ domain) with GLS2. Interacts (via its PDZ domain) with RTKN (via the C-terminal region); this interaction facilitates Rho-mediated activation of the FOS serum response element (SRE). Interacts (via its PDZ domain) with CTNNB1; this interaction inhibits the transcriptional activity of CTNNB1. Interacts with HTLV-1 TAX protein. Interacts (via PDZ domain) with ARHGEF16. Interacts (via PDZ domain) with KCNJ4 (via C-terminus). Competes with LIN7A for KCNJ4 binding. Interacts with ADGRB2. In terms of tissue distribution, ubiquitous. Detected in brain, heart, kidney, lung, small intestine and skeletal muscle. Detected in various cell lines including HeLa. Weakly expressed in peripheral blood leukocytes.

Its subcellular location is the cytoplasm. The protein resides in the nucleus. The protein localises to the cell membrane. Functionally, may regulate a number of protein-protein interactions by competing for PDZ domain binding sites. Binds CTNNB1 and may thereby act as an inhibitor of the Wnt signaling pathway. Competes with LIN7A for KCNJ4 binding, and thereby promotes KCNJ4 internalization. May play a role in the Rho signaling pathway. May play a role in activation of CDC42 by the viral protein HPV16 E6. This is Tax1-binding protein 3 from Homo sapiens (Human).